Here is a 116-residue protein sequence, read N- to C-terminus: Ribonuclease P protein component (116 aa).

It belongs to the RnpA family. Consists of a catalytic RNA component (M1 or rnpB) and a protein subunit.

It carries out the reaction Endonucleolytic cleavage of RNA, removing 5'-extranucleotides from tRNA precursor.. In terms of biological role, RNaseP catalyzes the removal of the 5'-leader sequence from pre-tRNA to produce the mature 5'-terminus. It can also cleave other RNA substrates such as 4.5S RNA. The protein component plays an auxiliary but essential role in vivo by binding to the 5'-leader sequence and broadening the substrate specificity of the ribozyme. This Caldanaerobacter subterraneus subsp. tengcongensis (strain DSM 15242 / JCM 11007 / NBRC 100824 / MB4) (Thermoanaerobacter tengcongensis) protein is Ribonuclease P protein component.